Here is a 217-residue protein sequence, read N- to C-terminus: MATVEPETTPTPNPPPTEEEKTESNQEVANPEHYIKHPLQNRWALWFFKNDKSKTWQANLRLISKFDTVEDFWALYNHIQLSSNLMPGCDYSLFKDGIEPMWEDEKNKRGGRWLITLNKQQRRSDLDRFWLETVLCLIGESFDDYSDDVCGAVVNVRAKGDKIAIWTTECENREAVTHIGRVYKERLGLPPKIVIGYQSHADTATKSGSTTKNRFVV.

The tract at residues 1-27 (MATVEPETTPTPNPPPTEEEKTESNQE) is disordered. The residue at position 2 (Ala-2) is an N-acetylalanine. Position 22 is a phosphothreonine (Thr-22). The interval 37 to 40 (HPLQ) is EIF4EBP1/2/3 binding. 56–57 (WQ) is a binding site for mRNA. Positions 73-77 (WALYN) are EIF4EBP1/2/3 binding. 102-103 (WE) is a binding site for mRNA. Residues 132–139 (ETVLCLIG) form an EIF4EBP1/2/3 binding region. MRNA is bound by residues 157-162 (RAKGDK) and 205-207 (TKS). Ser-209 is subject to Phosphoserine; by PKC and MKNK2.

The protein belongs to the eukaryotic initiation factor 4E family. In terms of assembly, eIF4F is a multi-subunit complex, the composition of which varies with external and internal environmental conditions. It is composed of at least EIF4A, EIF4E and EIF4G1/EIF4G3. EIF4E is also known to interact with other partners. Interacts with EIF4ENIF1/4E-T; promotes recruitment to P-bodies and import into the nucleus. Hypophosphorylated EIF4EBP1, EIF4EBP2 and EIF4EBP3 compete with EIF4G1/EIF4G3 to interact with EIF4E; insulin stimulated MAP-kinase (MAPK1 and MAPK3) phosphorylation of EIF4EBP1 causes dissociation of the complex allowing EIF4G1/EIF4G3 to bind and consequent initiation of translation. Interacts mutually exclusive with EIF4A1 or EIF4A2. Interacts with NGDN and PIWIL2. Component of the CYFIP1-EIF4E-FMR1 complex composed of CYFIP, EIF4E and FMR1. Interacts directly with CYFIP1. Interacts with CLOCK. Binds to MKNK2 in nucleus. Interacts with LIMD1, WTIP and AJUBA. Interacts with APOBEC3G in an RNA-dependent manner. Interacts with LARP1. Interacts with METTL3. Interacts with RBM24; this interaction prevents EIF4E from binding to p53/TP53 mRNA and inhibits the assembly of translation initiation complex. Interacts with DDX3X; interaction is direct and in an RNA-independent manner; this interaction enhances EIF4E cap-binding ability and is required for the repression of cap-dependent translation and the increase of IRES-mediated translation. DDX3X competes with EIF4G1 for interaction with EIF4E. Interacts with EIF4G1; which in a mutual exclusive interaction associates either with EIF1 or with EIF4E on a common binding site. Interacts with BTG4 and CNOT7. Interacts with LRPPRC (via N-terminus); the interaction promotes association of EIF4E with 4ESE-containing mRNAs. Interacts with mRNA cleavage enzyme CPSF3 and its cofactor CPSF1. Interacts (via RING-type zinc finger) with PML; the interaction results in conformational changes of both interacting proteins and reduces EIF4E affinity for the 5' m7G cap of mRNA, thus reducing EIF4E-mediated mRNA nuclear export. Interacts with homeobox protein HHEX/PRH; the interaction inhibits EIF4E-mediated mRNA nuclear export. Interacts with homeobox protein HOXA9; the interaction positively regulates EIF4E-mediated mRNA nuclear export. Interacts with homeobox protein EMX2. In terms of processing, phosphorylation increases the ability of the protein to bind to mRNA caps and to form the eIF4F complex. Phosphorylation also enhances its mRNA transport function. Phosphorylation at Ser-209 is not essential for protein synthesis.

It localises to the cytoplasm. The protein resides in the P-body. It is found in the stress granule. The protein localises to the nucleus. Its subcellular location is the nucleus speckle. It localises to the nuclear body. Acts in the cytoplasm to initiate and regulate protein synthesis and is required in the nucleus for export of a subset of mRNAs from the nucleus to the cytoplasm which promotes processes such as RNA capping, processing and splicing. Component of the protein complex eIF4F, which is involved in the recognition of the mRNA cap, ATP-dependent unwinding of 5'-terminal secondary structure and recruitment of mRNA to the ribosome. This protein recognizes and binds the 7-methylguanosine (m7G)-containing mRNA cap during an early step in the initiation of protein synthesis and facilitates ribosome binding by inducing the unwinding of the mRNAs secondary structures. Together with EIF4G1, antagonizes the scanning promoted by EIF1-EIF4G1 and is required for TISU translation, a process where the TISU element recognition makes scanning unnecessary. In addition to its role in translation initiation, also acts as a regulator of translation and stability in the cytoplasm. Component of the CYFIP1-EIF4E-FMR1 complex which binds to the mRNA cap and mediates translational repression: in the complex, EIF4E mediates the binding to the mRNA cap. Component of a multiprotein complex that sequesters and represses translation of proneurogenic factors during neurogenesis. In P-bodies, component of a complex that mediates the storage of translationally inactive mRNAs in the cytoplasm and prevents their degradation. May play an important role in spermatogenesis through translational regulation of stage-specific mRNAs during germ cell development. As well as its roles in translation, also involved in mRNA nucleocytoplasmic transport. Its role in mRNA export from the nucleus to the cytoplasm relies on its ability to bind the m7G cap of RNAs and on the presence of the 50-nucleotide EIF4E sensitivity element (4ESE) in the 3'UTR of sensitive transcripts. Interaction with the 4ESE is mediated by LRPPRC which binds simultaneously to both EIF4E and the 4ESE, thereby acting as a platform for assembly for the RNA export complex. EIF4E-dependent mRNA export is independent of ongoing protein or RNA synthesis and is also NFX1-independent but is XPO1-dependent with LRPPRC interacting with XPO1 to form an EIF4E-dependent mRNA export complex. Alters the composition of the cytoplasmic face of the nuclear pore to promote RNA export by reducing RANBP2 expression, relocalizing nucleoporin NUP214 and increasing expression of RANBP1 and RNA export factors DDX19 and GLE1. Promotes the nuclear export of cyclin CCND1 mRNA. Promotes the nuclear export of NOS2/iNOS mRNA. Promotes the nuclear export of MDM2 mRNA. Also promotes the export of additional mRNAs, including others involved in the cell cycle. In the nucleus, binds to capped splice factor-encoding mRNAs and stimulates their nuclear export to enhance splice factor production by increasing their cytoplasmic availability to the translation machinery. May also regulate splicing through interaction with the spliceosome in an RNA and m7G cap-dependent manner. Also binds to some pre-mRNAs and may play a role in their recruitment to the spliceosome. Promotes steady-state capping of a subset of coding and non-coding RNAs by mediating nuclear export of capping machinery mRNAs including RNMT, RNGTT and RAMAC to enhance their translation. Stimulates mRNA 3'-end processing by promoting the expression of several core cleavage complex factors required for mRNA cleavage and polyadenylation, and may also have a direct effect through its interaction with the CPSF3 cleavage enzyme. Rescues cells from apoptosis by promoting activation of serine/threonine-protein kinase AKT1 through mRNA export of NBS1 which potentiates AKT1 phosphorylation and also through mRNA export of AKT1 effectors, allowing for increased production of these proteins. The polypeptide is Eukaryotic translation initiation factor 4E (EIF4E) (Bos taurus (Bovine)).